Reading from the N-terminus, the 203-residue chain is ATP-dependent Clp protease proteolytic subunit (203 aa).

Residue Ser107 is the Nucleophile of the active site. His132 is an active-site residue.

This sequence belongs to the peptidase S14 family. As to quaternary structure, fourteen ClpP subunits assemble into 2 heptameric rings which stack back to back to give a disk-like structure with a central cavity, resembling the structure of eukaryotic proteasomes.

It is found in the cytoplasm. The catalysed reaction is Hydrolysis of proteins to small peptides in the presence of ATP and magnesium. alpha-casein is the usual test substrate. In the absence of ATP, only oligopeptides shorter than five residues are hydrolyzed (such as succinyl-Leu-Tyr-|-NHMec, and Leu-Tyr-Leu-|-Tyr-Trp, in which cleavage of the -Tyr-|-Leu- and -Tyr-|-Trp bonds also occurs).. Cleaves peptides in various proteins in a process that requires ATP hydrolysis. Has a chymotrypsin-like activity. Plays a major role in the degradation of misfolded proteins. The polypeptide is ATP-dependent Clp protease proteolytic subunit (Shewanella woodyi (strain ATCC 51908 / MS32)).